The sequence spans 484 residues: ATP-dependent RNA helicase DDX25 (484 aa).

A Phosphothreonine modification is found at Thr-49. A Nuclear export signal motif is present at residues 62–75; it reads LAANSLLNKLIRQS. Positions 98-126 match the Q motif motif; sequence KTFEELRLKEELLKGIYAMGFNRPSKIQE. The Nuclear localization signal signature appears at 101–115; sequence EELRLKEELLKGIYA. In terms of domain architecture, Helicase ATP-binding spans 131 to 301; it reads MMLAHPPQNL…ERIIPDPNVI (171 aa). An ATP-binding site is contributed by 144–151; that stretch reads SQSGTGKT. The short motif at 248–251 is the DEAD box element; that stretch reads DEAD. The Helicase C-terminal domain occupies 312-479; the sequence is NIRQYYVLCE…QLDPEDMDEI (168 aa).

Belongs to the DEAD box helicase family. In terms of processing, phosphorylated on threonine residues. The phosphorylated form is found in the cytoplasm but not in the nucleus. In terms of tissue distribution, isoform 1 is expressed in germ cells. Isoform 2 is expressed in Leydig cells and in round spermatids of adult testis upon gonadotropin stimulation.

The protein localises to the cytoplasm. Its subcellular location is the nucleus. The catalysed reaction is ATP + H2O = ADP + phosphate + H(+). In terms of biological role, ATP-dependent RNA helicase. Required for mRNA export and translation regulation during spermatid development. The sequence is that of ATP-dependent RNA helicase DDX25 (Ddx25) from Mus musculus (Mouse).